The chain runs to 192 residues: UPF0312 protein PC1_2518 (192 aa).

An N-terminal signal peptide occupies residues Met1–Ala23.

This sequence belongs to the UPF0312 family. Type 1 subfamily.

Its subcellular location is the periplasm. This Pectobacterium carotovorum subsp. carotovorum (strain PC1) protein is UPF0312 protein PC1_2518.